Reading from the N-terminus, the 587-residue chain is Nucleoporin p58/p45 (587 aa).

A run of 5 repeats spans residues 7–8 (FG), 30–31 (FG), 44–45 (FG), 63–64 (FG), and 68–69 (FG). The segment at 7–567 (FGSGTLGSTT…VSNPASAGFG (561 aa)) is 14 X 2 AA repeats of F-G. The segment at 196 to 236 (TSAASNEGLGGIDFSTSSDKKSDKTGTRPEDSKALKDENLP) is disordered. A compositionally biased stretch (basic and acidic residues) spans 213–234 (SDKKSDKTGTRPEDSKALKDEN). 2 coiled-coil regions span residues 244-264 (ENLQ…SRMS) and 302-369 (ETAQ…SHIT). T319 is modified (phosphothreonine). Repeat copies occupy residues 476–477 (FG), 480–481 (FG), 501–502 (FG), 507–508 (FG), 517–518 (FG), 519–520 (FG), 533–534 (FG), 556–557 (FG), and 566–567 (FG). Residues 565-587 (GFGTGGQLLQLKRPPAGNKRGKR) are disordered.

It belongs to the NUP58 family. As to quaternary structure, component of the p62 complex, a complex at least composed of NUP62, NUP54, and NUP58. Interacts with NUTF2. Interacts with SRP1-alpha and Importin p97 proteins when they are together, but not with SRP1-alpha protein alone. O-glycosylated.

It is found in the nucleus. Its subcellular location is the nuclear pore complex. The protein resides in the nucleus membrane. Its function is as follows. Component of the nuclear pore complex, a complex required for the trafficking across the nuclear membrane. This Mus musculus (Mouse) protein is Nucleoporin p58/p45.